Consider the following 125-residue polypeptide: Small ribosomal subunit protein uS12 (125 aa).

Asp89 is modified (3-methylthioaspartic acid). Positions 104-125 (TAGVKDRSQSRSKYGAKASKQD) are disordered.

The protein belongs to the universal ribosomal protein uS12 family. As to quaternary structure, part of the 30S ribosomal subunit. Contacts proteins S8 and S17. May interact with IF1 in the 30S initiation complex.

Functionally, with S4 and S5 plays an important role in translational accuracy. Its function is as follows. Interacts with and stabilizes bases of the 16S rRNA that are involved in tRNA selection in the A site and with the mRNA backbone. Located at the interface of the 30S and 50S subunits, it traverses the body of the 30S subunit contacting proteins on the other side and probably holding the rRNA structure together. The combined cluster of proteins S8, S12 and S17 appears to hold together the shoulder and platform of the 30S subunit. This chain is Small ribosomal subunit protein uS12, found in Prochlorococcus marinus (strain MIT 9303).